A 250-amino-acid chain; its full sequence is Octanoyltransferase (250 aa).

The 181-residue stretch at 44-224 folds into the BPL/LPL catalytic domain; the sequence is GAGSDRLLLL…AVVQALNGDL (181 aa). Residues 82 to 89, 154 to 156, and 167 to 169 contribute to the substrate site; these read RGGKITWH, AIG, and GIS. Catalysis depends on cysteine 185, which acts as the Acyl-thioester intermediate. The interval 224–250 is disordered; sequence LPVRDHDLPRPGTTPAAPNSTRVRSMT. The span at 239-250 shows a compositional bias: polar residues; it reads AAPNSTRVRSMT.

The protein belongs to the LipB family.

It localises to the cytoplasm. The enzyme catalyses octanoyl-[ACP] + L-lysyl-[protein] = N(6)-octanoyl-L-lysyl-[protein] + holo-[ACP] + H(+). It participates in protein modification; protein lipoylation via endogenous pathway; protein N(6)-(lipoyl)lysine from octanoyl-[acyl-carrier-protein]: step 1/2. In terms of biological role, catalyzes the transfer of endogenously produced octanoic acid from octanoyl-acyl-carrier-protein onto the lipoyl domains of lipoate-dependent enzymes. Lipoyl-ACP can also act as a substrate although octanoyl-ACP is likely to be the physiological substrate. This Nocardia farcinica (strain IFM 10152) protein is Octanoyltransferase.